The chain runs to 450 residues: Signal recognition particle protein (450 aa).

GTP is bound by residues 106–113 (GLQGSGKT), 188–192 (DTAGR), and 246–249 (TKLD).

Belongs to the GTP-binding SRP family. SRP54 subfamily. In terms of assembly, part of the signal recognition particle protein translocation system, which is composed of SRP and FtsY.

The protein resides in the cytoplasm. It catalyses the reaction GTP + H2O = GDP + phosphate + H(+). In terms of biological role, involved in targeting and insertion of nascent membrane proteins into the cytoplasmic membrane. Binds to the hydrophobic signal sequence of the ribosome-nascent chain (RNC) as it emerges from the ribosomes. The SRP-RNC complex is then targeted to the cytoplasmic membrane where it interacts with the SRP receptor FtsY. The chain is Signal recognition particle protein from Mycoplasma pneumoniae (strain ATCC 29342 / M129 / Subtype 1) (Mycoplasmoides pneumoniae).